A 376-amino-acid polypeptide reads, in one-letter code: Queuine tRNA-ribosyltransferase (376 aa).

The active-site Proton acceptor is Asp-93. Substrate-binding positions include Asp-93–Phe-97, Asp-147, Gln-190, and Gly-217. The segment at Gly-248–Asp-254 is RNA binding. Residue Asp-267 is the Nucleophile of the active site. 4 residues coordinate Zn(2+): Cys-305, Cys-307, Cys-310, and His-336.

It belongs to the queuine tRNA-ribosyltransferase family. In terms of assembly, homodimer. Within each dimer, one monomer is responsible for RNA recognition and catalysis, while the other monomer binds to the replacement base PreQ1. It depends on Zn(2+) as a cofactor.

The catalysed reaction is 7-aminomethyl-7-carbaguanine + guanosine(34) in tRNA = 7-aminomethyl-7-carbaguanosine(34) in tRNA + guanine. The protein operates within tRNA modification; tRNA-queuosine biosynthesis. Its function is as follows. Catalyzes the base-exchange of a guanine (G) residue with the queuine precursor 7-aminomethyl-7-deazaguanine (PreQ1) at position 34 (anticodon wobble position) in tRNAs with GU(N) anticodons (tRNA-Asp, -Asn, -His and -Tyr). Catalysis occurs through a double-displacement mechanism. The nucleophile active site attacks the C1' of nucleotide 34 to detach the guanine base from the RNA, forming a covalent enzyme-RNA intermediate. The proton acceptor active site deprotonates the incoming PreQ1, allowing a nucleophilic attack on the C1' of the ribose to form the product. After dissociation, two additional enzymatic reactions on the tRNA convert PreQ1 to queuine (Q), resulting in the hypermodified nucleoside queuosine (7-(((4,5-cis-dihydroxy-2-cyclopenten-1-yl)amino)methyl)-7-deazaguanosine). This chain is Queuine tRNA-ribosyltransferase, found in Cereibacter sphaeroides (strain ATCC 17029 / ATH 2.4.9) (Rhodobacter sphaeroides).